The following is a 502-amino-acid chain: C2H2-type transcription factor MSN2 (502 aa).

C2H2-type zinc fingers lie at residues 385–408 (FVCHLCTRRFRRQEHLKRHFRSLH) and 414–436 (FACGECGKKFSRSDNLTQHSRIH).

The protein localises to the nucleus. Key downstream transcription factor in the HOG1-MAPK pathway. Plays crucial roles in the regulation of growth, conidiation, trap development and fatty acid metabolism. Negatively regulates secondary metabolism such as arthrobotrisins biosynthesis.Also regulates autophagy and endocytosis. This is C2H2-type transcription factor MSN2 from Arthrobotrys oligospora (strain ATCC 24927 / CBS 115.81 / DSM 1491) (Nematode-trapping fungus).